The following is a 457-amino-acid chain: Transcription factor PCF7 (457 aa).

The stretch at 58–84 (STLHYLLQEKERAQQAHEQLQIYQQQQ) forms a coiled coil. The segment at 95 to 119 (RQPASRGPGGGGGGGDGGGSSGEST) is disordered. Gly residues predominate over residues 101-115 (GPGGGGGGGDGGGSS). One can recognise a TCP domain in the interval 140 to 198 (RKDRHSKVCTARGLRDRRVRLAAHTAIRFYDVQDRLGYDRPSKAVDWLMRNAKAAIDEL). Disordered stretches follow at residues 199–231 (PDRA…GFGN) and 263–299 (KSLF…SNQQ). Low complexity-rich tracts occupy residues 210 to 225 (AAST…ATST) and 268 to 278 (SSSTASGAASA).

In terms of assembly, forms homodimers and heterodimers.

It is found in the nucleus. Transcription activator. Binds the promoter core sequence 5'-GGNCC-3'. The polypeptide is Transcription factor PCF7 (PCF7) (Oryza sativa subsp. japonica (Rice)).